The sequence spans 107 residues: Iron-sulfur cluster assembly protein CyaY (107 aa).

Belongs to the frataxin family.

Its function is as follows. Involved in iron-sulfur (Fe-S) cluster assembly. May act as a regulator of Fe-S biogenesis. In Edwardsiella ictaluri (strain 93-146), this protein is Iron-sulfur cluster assembly protein CyaY.